The following is a 1446-amino-acid chain: Toll-like receptor 7 (1446 aa).

The signal sequence occupies residues 1–16; it reads MAAILLLLLGFSWSLA. The Extracellular segment spans residues 17–1049; the sequence is VESALAPKES…QHGIPESYIP (1033 aa). LRR repeat units follow at residues 133-156, 158-180, 188-211, 213-235, 246-270, 271-294, 295-318, 320-342, 344-368, 369-392, 393-416, 417-440, 442-464, 465-488, 489-511, 513-535, 536-559, 561-582, 584-605, 606-629, 631-652, 653-675, and 677-699; these read LQTL…AFEG, ATLK…TLEL, LKQL…FLCP, GNLQ…GFAD, GSEL…GISR, LRRL…ALAG, LASL…LFAG, KELR…LFHR, EQLL…TFAG, LIRL…TFKE, LYFL…AFLP, LYNL…LFNG, YVLS…VFKN, CSDL…LQDL, AMLR…SFKN, HQLT…MFQD, LPRL…SFDK, FELE…VFAT, VSLL…AFIP, SNLK…KLQE, IRVK…MSIP, NTIE…AFVD, and ANLA…QLRV. One can recognise an LRRCT domain in the interval 716-773; sequence NPFECDCTMDWLQRINNLTTRQHPRVMDMANIECVMPHARGAAVRPLSGLRPQDFLCR. 3 cysteine pairs are disulfide-bonded: C722/C772, C796/C802, and C800/C815. 6 LRR repeats span residues 828-851, 852-875, 876-899, 900-923, 925-947, and 951-979; these read PMDS…AFIG, RKNL…TFAS, LASL…EFEQ, LSAL…TLAP, AALE…QMHA, and GTRL…SYVA. A disulfide bond links C966 and C993. A helical transmembrane segment spans residues 1050–1070; sequence LLAAALALLFLLVVIAMVFAF. Over 1071-1446 the chain is Cytoplasmic; it reads RESLRIWLFA…QGPHVQAYLV (376 aa). A TIR domain is found at 1096 to 1233; the sequence is KLYDAVLLHS…HFWEKLRYAL (138 aa). 2 disordered regions span residues 1301 to 1332 and 1388 to 1446; these read QNYS…NHHL and RPKR…AYLV. Residues 1395 to 1413 show a composition bias toward polar residues; sequence HLQQAQAGTLGSKASQAAH. Residues 1414–1426 are compositionally biased toward low complexity; the sequence is QQQQQQQQQQQQQ. Polar residues predominate over residues 1427–1439; that stretch reads PNPTAVSGQQQGP.

This sequence belongs to the Toll-like receptor family. In terms of tissue distribution, expressed in the fan-shaped body and the ellipsoid body, which are components of the locomotion center in the CNS (at protein level).

It is found in the cell membrane. Its function is as follows. Toll-related receptor which binds to the neurotrophins NT1 and spz5. Essential for antiviral autophagy, it detects and binds to the vesicular stomatitis virus (vsv) following infection. This role is likely to be independent of the canonical Toll, immune deficiency, and JAK-STAT signaling pathways. Functions in olfactory circuit assembly by promoting synaptic partner matching between olfactory receptor neurons (ORN) axons and projection neurons (PN) dendrites partners in the antennal lobe. Function in the Va1d ORNs is necessary and sufficient for correct targeting to their partner PN dendrites. Also involved in the targeting of other classes of ORN axons. Functions with Toll-6 to regulate motor axon targeting and neuronal survival in the central nervous system (CNS). May be an upstream component of the NF-kappa-B (rel) regulatory cascade. This chain is Toll-like receptor 7, found in Drosophila melanogaster (Fruit fly).